Here is a 204-residue protein sequence, read N- to C-terminus: Methylthioribulose-1-phosphate dehydratase (204 aa).

Zn(2+)-binding residues include histidine 94 and histidine 96.

The protein belongs to the aldolase class II family. MtnB subfamily. The cofactor is Zn(2+).

It carries out the reaction 5-(methylsulfanyl)-D-ribulose 1-phosphate = 5-methylsulfanyl-2,3-dioxopentyl phosphate + H2O. It participates in amino-acid biosynthesis; L-methionine biosynthesis via salvage pathway; L-methionine from S-methyl-5-thio-alpha-D-ribose 1-phosphate: step 2/6. Functionally, catalyzes the dehydration of methylthioribulose-1-phosphate (MTRu-1-P) into 2,3-diketo-5-methylthiopentyl-1-phosphate (DK-MTP-1-P). This Pseudomonas syringae pv. syringae (strain B728a) protein is Methylthioribulose-1-phosphate dehydratase.